A 341-amino-acid polypeptide reads, in one-letter code: MASEAPPFWWDEPDWRALALAPAAWIYGRVSGRRLIRAVPPRVSLPVLCVGNFTVGGAGKTPTAIAFARGAIARGMKPGIVSRGYGGNYSGLHLVDPGHDGARHVGDEPLLLARHAAVALSPDRVKAAEYLKSLGCDFIIMDDGFQSARLHADFSLLVVDASRGIGNGRVIPAGPLRAPLTDQMRKTDALLCIGKGNGADFVIRQAARAGRPIYHAQLRPSSSATVAGRRWLAFAGIGNPDKFYESVRQAGGEVVETHSFADHYSFEPDDIRGLVDMARRQGLGLITTAKDHVRLATMPGVPPEFLSKLAVLDVDLEFDRTDALGHILDTVVERFKSRLHG.

54-61 (TVGGAGKT) lines the ATP pocket.

This sequence belongs to the LpxK family.

It catalyses the reaction a lipid A disaccharide + ATP = a lipid IVA + ADP + H(+). The protein operates within glycolipid biosynthesis; lipid IV(A) biosynthesis; lipid IV(A) from (3R)-3-hydroxytetradecanoyl-[acyl-carrier-protein] and UDP-N-acetyl-alpha-D-glucosamine: step 6/6. Functionally, transfers the gamma-phosphate of ATP to the 4'-position of a tetraacyldisaccharide 1-phosphate intermediate (termed DS-1-P) to form tetraacyldisaccharide 1,4'-bis-phosphate (lipid IVA). In Brucella melitensis biotype 2 (strain ATCC 23457), this protein is Tetraacyldisaccharide 4'-kinase.